The chain runs to 89 residues: Small ribosomal subunit protein uS17 (89 aa).

This sequence belongs to the universal ribosomal protein uS17 family. In terms of assembly, part of the 30S ribosomal subunit.

Its function is as follows. One of the primary rRNA binding proteins, it binds specifically to the 5'-end of 16S ribosomal RNA. The protein is Small ribosomal subunit protein uS17 of Paracidovorax citrulli (strain AAC00-1) (Acidovorax citrulli).